The primary structure comprises 340 residues: NADPH dehydrogenase (340 aa).

Residue 23-26 (SPMC) participates in FMN binding. Tyr-28 is a substrate binding site. FMN is bound by residues Ala-60 and Gln-102. 164 to 167 (HAAH) serves as a coordination point for substrate. Residues Arg-215 and 307-308 (GR) each bind FMN.

The protein belongs to the NADH:flavin oxidoreductase/NADH oxidase family. NamA subfamily. Homotetramer. FMN serves as cofactor.

It catalyses the reaction A + NADPH + H(+) = AH2 + NADP(+). In terms of biological role, catalyzes the reduction of the double bond of an array of alpha,beta-unsaturated aldehydes and ketones. It also reduces the nitro group of nitroester and nitroaromatic compounds. It could have a role in detoxification processes. This chain is NADPH dehydrogenase, found in Geobacillus thermodenitrificans (strain NG80-2).